Consider the following 196-residue polypeptide: uncharacterized protein (196 aa).

Residues 15–22 (SQGKFNKT), 68–71 (GWWM), Y107, and 123–126 (TWNA) contribute to the FAD site.

The protein belongs to the oxidoreductase MdaB family. It depends on FAD as a cofactor.

This is an uncharacterized protein from Schizosaccharomyces pombe (strain 972 / ATCC 24843) (Fission yeast).